The primary structure comprises 395 residues: ATP-dependent RNA helicase eIF4A (395 aa).

The residue at position 2 (Ser2) is an N-acetylserine. The Q motif motif lies at 22–50 (YKFDDMELDENLLRGVFGYGFEEPSAIQQ). The 170-residue stretch at 53–222 (IMPIIEGHDV…TKFMRNPVRI (170 aa)) folds into the Helicase ATP-binding domain. An ATP-binding site is contributed by 66–73 (AQSGTGKT). Thr73 is subject to Phosphothreonine. Ser77 and Ser129 each carry phosphoserine. A Phosphothreonine modification is found at Thr146. The DEAD box signature appears at 170-173 (DEAD). The region spanning 233–394 (GIKQFYVNVE…ELPSDIATLL (162 aa)) is the Helicase C-terminal domain.

This sequence belongs to the DEAD box helicase family. eIF4A subfamily. In terms of assembly, component of the eIF4F complex, which composition varies with external and internal environmental conditions. It is composed of at least eIF4A, eIF4E and eIF4G.

It is found in the cytoplasm. It catalyses the reaction ATP + H2O = ADP + phosphate + H(+). Its function is as follows. ATP-dependent RNA helicase which is a subunit of the eIF4F complex involved in cap recognition and is required for mRNA binding to ribosome. In the current model of translation initiation, eIF4A unwinds RNA secondary structures in the 5'-UTR of mRNAs which is necessary to allow efficient binding of the small ribosomal subunit, and subsequent scanning for the initiator codon. This is ATP-dependent RNA helicase eIF4A (TIF1) from Saccharomyces cerevisiae (strain YJM789) (Baker's yeast).